The chain runs to 149 residues: MLRNRITSRRSISSSVSALANYGKPQNPAIDTTVKMRIQPIKREGETMEIKRARLIYQSRKRGILESDLLLSRFAKKYLNEFTEAELDEYDRLLDEPDWDIYYWATKNYDVTPLPDKWKDSKILKMLQEDAKNDDREILRMPELDLEQK.

It belongs to the SDHAF2 family. As to quaternary structure, interacts with the flavoprotein subunit within the SDH catalytic dimer.

The protein localises to the mitochondrion matrix. Functionally, plays an essential role in the assembly of succinate dehydrogenase (SDH), an enzyme complex (also referred to as respiratory complex II) that is a component of both the tricarboxylic acid (TCA) cycle and the mitochondrial electron transport chain, and which couples the oxidation of succinate to fumarate with the reduction of ubiquinone (coenzyme Q) to ubiquinol. Required for flavinylation (covalent attachment of FAD) of the flavoprotein subunit of the SDH catalytic dimer. This Scheffersomyces stipitis (strain ATCC 58785 / CBS 6054 / NBRC 10063 / NRRL Y-11545) (Yeast) protein is Succinate dehydrogenase assembly factor 2, mitochondrial.